The sequence spans 485 residues: Zinc finger protein 165 (485 aa).

Lysine 23 participates in a covalent cross-link: Glycyl lysine isopeptide (Lys-Gly) (interchain with G-Cter in SUMO2). Residues 62–127 form the SCAN box domain; that stretch reads GPREALSRLR…EEAVTILEDL (66 aa). Residues lysine 162 and lysine 195 each participate in a glycyl lysine isopeptide (Lys-Gly) (interchain with G-Cter in SUMO2) cross-link. A C2H2-type 1; degenerate zinc finger spans residues 290–314; that stretch reads KSCKHGTCDQSFKWNSDFINHQIIY. C2H2-type zinc fingers lie at residues 344–366, 372–394, 400–422, 428–450, and 456–478; these read HQCN…QRIH, YECN…RRIH, FGCK…QRIH, YECS…FRIH, and YECS…QRIH.

It belongs to the krueppel C2H2-type zinc-finger protein family. Expressed specifically in testis.

It is found in the nucleus. Its function is as follows. May be involved in transcriptional regulation. The sequence is that of Zinc finger protein 165 (ZNF165) from Homo sapiens (Human).